Here is a 107-residue protein sequence, read N- to C-terminus: uncharacterized protein (107 aa).

A helical membrane pass occupies residues 25 to 42 (LSLCSVLLSWLICAMCLW).

The protein localises to the host membrane. This is an uncharacterized protein from Galliformes (FAdV-1).